A 310-amino-acid polypeptide reads, in one-letter code: Phosphoribosylaminoimidazole-succinocarboxamide synthase (310 aa).

Belongs to the SAICAR synthetase family.

The catalysed reaction is 5-amino-1-(5-phospho-D-ribosyl)imidazole-4-carboxylate + L-aspartate + ATP = (2S)-2-[5-amino-1-(5-phospho-beta-D-ribosyl)imidazole-4-carboxamido]succinate + ADP + phosphate + 2 H(+). It participates in purine metabolism; IMP biosynthesis via de novo pathway; 5-amino-1-(5-phospho-D-ribosyl)imidazole-4-carboxamide from 5-amino-1-(5-phospho-D-ribosyl)imidazole-4-carboxylate: step 1/2. This chain is Phosphoribosylaminoimidazole-succinocarboxamide synthase, found in Xanthomonas campestris pv. campestris (strain B100).